The sequence spans 130 residues: Acidic phospholipase A2 daboiatoxin B chain (130 aa).

A signal peptide spans M1 to G8. 7 disulfide bridges follow: C34–C123, C36–C52, C51–C103, C57–C130, C58–C96, C65–C89, and C83–C94. Residues Y35, G37, and G39 each coordinate Ca(2+). Residue H55 is part of the active site. D56 is a binding site for Ca(2+). The active site involves D97.

This sequence belongs to the phospholipase A2 family. Group II subfamily. D49 sub-subfamily. In terms of assembly, heterodimer of an acidic protein having phospholipase A2 activity (B chain) and an A chain which weakly inhibits the B chain enzymatic activity but potentiates its lethal potency. It depends on Ca(2+) as a cofactor. In terms of tissue distribution, expressed by the venom gland.

The protein resides in the secreted. It catalyses the reaction a 1,2-diacyl-sn-glycero-3-phosphocholine + H2O = a 1-acyl-sn-glycero-3-phosphocholine + a fatty acid + H(+). Monomer: Snake venom phospholipase A2 (PLA2) that shows a high PLA2 activity (2110 umol/min/mg). In terms of biological role, heterodimer (A and B chains): snake venom phospholipase A2 that shows a moderate PLA2 activity (1377 umol/min/mg). Acts as a presynaptic neurotoxin. In vivo, induces edema and produces neurotoxic symptoms in mice. It exhibits indirect hemolysis and a strong myonecrotic activity and is cytotoxic. PLA2 catalyzes the calcium-dependent hydrolysis of the 2-acyl groups in 3-sn-phosphoglycerides. The sequence is that of Acidic phospholipase A2 daboiatoxin B chain from Daboia siamensis (Eastern Russel's viper).